Here is a 92-residue protein sequence, read N- to C-terminus: Probable Fe(2+)-trafficking protein (92 aa).

Belongs to the Fe(2+)-trafficking protein family.

Its function is as follows. Could be a mediator in iron transactions between iron acquisition and iron-requiring processes, such as synthesis and/or repair of Fe-S clusters in biosynthetic enzymes. The protein is Probable Fe(2+)-trafficking protein of Shewanella sp. (strain ANA-3).